Consider the following 572-residue polypeptide: FAD-linked oxidoreductase patO (572 aa).

The N-terminal stretch at 1-23 (MRLSIYSSILLLRAMCLVRPTFG) is a signal peptide. Asparagine 48, asparagine 71, asparagine 126, asparagine 180, asparagine 309, asparagine 354, asparagine 381, asparagine 422, asparagine 446, and asparagine 481 each carry an N-linked (GlcNAc...) asparagine glycan. In terms of domain architecture, FAD-binding PCMH-type spans 115–295 (CAPGDMVVYS…YSMTVKAFPD (181 aa)).

It belongs to the oxygen-dependent FAD-linked oxidoreductase family. FAD is required as a cofactor.

The protein resides in the vacuole lumen. It functions in the pathway mycotoxin biosynthesis; patulin biosynthesis. Functionally, FAD-linked oxidoreductase; part of the gene cluster that mediates the biosynthesis of patulin, an acetate-derived tetraketide mycotoxin produced by several fungal species that shows antimicrobial properties against several bacteria. PatO acts with patJ in the vacuole to convert gentisyl alcohol to isoepoxydon. The pathway begins with the synthesis of 6-methylsalicylic acid by the polyketide synthase (PKS) patK via condensation of acetate and malonate units. The 6-methylsalicylic acid decarboxylase patG then catalyzes the decarboxylation of 6-methylsalicylic acid to yield m-cresol (also known as 3-methylphenol). These first reactions occur in the cytosol. The intermediate m-cresol is then transported into the endoplasmic reticulum where the cytochrome P450 monooxygenase patH converts it to m-hydroxybenzyl alcohol, which is further converted to gentisyl alcohol by the cytochrome P450 monooxygenase patI. The oxidoreductases patJ and patO further convert gentisyl alcohol to isoepoxydon in the vacuole. PatN catalyzes then the transformation of isoepoxydon into phyllostine. The cluster protein patF is responsible for the conversion from phyllostine to neopatulin whereas the alcohol dehydrogenase patD converts neopatulin to E-ascladiol. The steps between isoepoxydon and E-ascladiol occur in the cytosol, and E-ascladiol is probably secreted to the extracellular space by one of the cluster-specific transporters patC or patM. Finally, the secreted patulin synthase patE catalyzes the conversion of E-ascladiol to patulin. In Aspergillus clavatus (strain ATCC 1007 / CBS 513.65 / DSM 816 / NCTC 3887 / NRRL 1 / QM 1276 / 107), this protein is FAD-linked oxidoreductase patO.